The primary structure comprises 82 residues: Acyl carrier protein (82 aa).

Residues 4 to 79 (PEMESRLKKI…DALNYIEQKL (76 aa)) form the Carrier domain. Position 39 is an O-(pantetheine 4'-phosphoryl)serine (Ser-39).

It belongs to the acyl carrier protein (ACP) family. Post-translationally, 4'-phosphopantetheine is transferred from CoA to a specific serine of apo-ACP by AcpS. This modification is essential for activity because fatty acids are bound in thioester linkage to the sulfhydryl of the prosthetic group.

The protein localises to the cytoplasm. The protein operates within lipid metabolism; fatty acid biosynthesis. Its function is as follows. Carrier of the growing fatty acid chain in fatty acid biosynthesis. The chain is Acyl carrier protein from Roseiflexus sp. (strain RS-1).